The chain runs to 744 residues: Leucine-rich repeat extensin-like protein 1 (744 aa).

Positions 1-26 (MLFPPLRSLFLFTLLLSSVCFLQIKA) are cleaved as a signal peptide. Asn-71 and Asn-77 each carry an N-linked (GlcNAc...) asparagine glycan. 9 LRR repeats span residues 122 to 145 (LSDL…TFNR), 147 to 170 (KLLY…VLSL), 171 to 194 (PSLK…LFDR), 196 to 217 (LDAI…MGNS), 219 to 240 (VSAL…IGQM), 241 to 265 (GKTL…IGNL), 266 to 289 (KKVT…VGNM), 290 to 313 (KSLE…ICQL), and 315 to 336 (NLEN…CAAS). N-linked (GlcNAc...) asparagine glycosylation occurs at Asn-253. 2 N-linked (GlcNAc...) asparagine glycosylation sites follow: Asn-318 and Asn-344. An LRR 10 repeat occupies 381–404 (FSPPPPTFKMSPEVRTLPPPIYVY). Positions 382 to 744 (SPPPPTFKMS…ASPPPPPSYY (363 aa)) are contains the Ser-Pro(4) repeats. Disordered regions lie at residues 408–445 (PPPP…PPPP), 518–537 (VYSS…PESS), 555–576 (PSPV…VYYP), and 658–744 (PPPS…PSYY). Positions 430–439 (SKMSPSVRAY) are enriched in low complexity. A compositionally biased stretch (pro residues) spans 704–729 (YEPPPEYSYSSSPPPPSPTSYFPPMP).

Post-translationally, hydroxylated on proline residues in the S-P-P-P-P repeat. O-glycosylated on hydroxyprolines. As to expression, expressed in root hair cells (at protein level).

It localises to the secreted. Its subcellular location is the cell wall. Its function is as follows. Modulates cell morphogenesis by regulating cell wall formation and assembly, and/or growth polarization. Together with LRX2, component of the extracellular mechanism regulating root hair morphogenesis and elongation. The polypeptide is Leucine-rich repeat extensin-like protein 1 (LRX1) (Arabidopsis thaliana (Mouse-ear cress)).